Reading from the N-terminus, the 109-residue chain is NADH-quinone oxidoreductase subunit K (109 aa).

3 helical membrane passes run 12–32, 40–60, and 72–92; these read LNHYLILSSLVFTIGMLGLFM, ILMSIELMLLAVNINFVAFSV, and IIILTIAAAETSIGLAILLIY.

The protein belongs to the complex I subunit 4L family. NDH-1 is composed of 14 different subunits. Subunits NuoA, H, J, K, L, M, N constitute the membrane sector of the complex.

It is found in the cell inner membrane. It carries out the reaction a quinone + NADH + 5 H(+)(in) = a quinol + NAD(+) + 4 H(+)(out). Its function is as follows. NDH-1 shuttles electrons from NADH, via FMN and iron-sulfur (Fe-S) centers, to quinones in the respiratory chain. The immediate electron acceptor for the enzyme in this species is believed to be ubiquinone. Couples the redox reaction to proton translocation (for every two electrons transferred, four hydrogen ions are translocated across the cytoplasmic membrane), and thus conserves the redox energy in a proton gradient. The protein is NADH-quinone oxidoreductase subunit K of Rickettsia bellii (strain RML369-C).